We begin with the raw amino-acid sequence, 55 residues long: MGKSNVIQIRLVSSAETGYFYVTKKNARSATGKMEVRKYDPVARKHVVFREAKIK.

The protein belongs to the bacterial ribosomal protein bL33 family.

This Gluconobacter oxydans (strain 621H) (Gluconobacter suboxydans) protein is Large ribosomal subunit protein bL33.